Reading from the N-terminus, the 348-residue chain is Protein RecA (348 aa).

67 to 74 (GPESSGKT) contributes to the ATP binding site.

Belongs to the RecA family.

It is found in the cytoplasm. Functionally, can catalyze the hydrolysis of ATP in the presence of single-stranded DNA, the ATP-dependent uptake of single-stranded DNA by duplex DNA, and the ATP-dependent hybridization of homologous single-stranded DNAs. It interacts with LexA causing its activation and leading to its autocatalytic cleavage. In Kineococcus radiotolerans (strain ATCC BAA-149 / DSM 14245 / SRS30216), this protein is Protein RecA.